Here is a 450-residue protein sequence, read N- to C-terminus: C4-dicarboxylate transport protein (450 aa).

8 consecutive transmembrane segments (helical) span residues 25-45 (VVFAIIIGVLLGHFQPEYGAA), 56-76 (LIKMIIAPVIFLTIVTGIASM), 90-110 (MAYFLTFSTLALVVGLVVANV), 162-182 (ILQVLLVAVLFGVSLAMVGDA), 200-220 (LVNIVMKAAPIGAFGAMAFTI), 234-254 (LVLTFYITSAVFVLVVLGAVA), 319-339 (IYMTLAALFIAQATDTHLTLG), and 367-387 (AATLAVVPEVPVAGMALILGV).

This sequence belongs to the dicarboxylate/amino acid:cation symporter (DAACS) (TC 2.A.23) family.

It is found in the cell inner membrane. Responsible for the transport of dicarboxylates such as succinate, fumarate, and malate from the periplasm across the membrane. This chain is C4-dicarboxylate transport protein, found in Acidovorax ebreus (strain TPSY) (Diaphorobacter sp. (strain TPSY)).